We begin with the raw amino-acid sequence, 342 residues long: Ferrochelatase (342 aa).

Residues His-188 and Glu-268 each coordinate Fe cation.

Belongs to the ferrochelatase family.

It is found in the cytoplasm. The catalysed reaction is heme b + 2 H(+) = protoporphyrin IX + Fe(2+). It participates in porphyrin-containing compound metabolism; protoheme biosynthesis; protoheme from protoporphyrin-IX: step 1/1. Its function is as follows. Catalyzes the ferrous insertion into protoporphyrin IX. This chain is Ferrochelatase, found in Rickettsia conorii (strain ATCC VR-613 / Malish 7).